We begin with the raw amino-acid sequence, 105 residues long: Nitrogen fixation nifHD region GlnB-like protein 1 (105 aa).

This sequence belongs to the P(II) protein family.

In terms of biological role, could be involved in the regulation of nitrogen fixation. This Methanothermococcus thermolithotrophicus (Methanococcus thermolithotrophicus) protein is Nitrogen fixation nifHD region GlnB-like protein 1 (glnBA).